Reading from the N-terminus, the 330-residue chain is Phenylalanine--tRNA ligase alpha subunit (330 aa).

Glu-257 lines the Mg(2+) pocket.

Belongs to the class-II aminoacyl-tRNA synthetase family. Phe-tRNA synthetase alpha subunit type 1 subfamily. In terms of assembly, tetramer of two alpha and two beta subunits. It depends on Mg(2+) as a cofactor.

The protein resides in the cytoplasm. It carries out the reaction tRNA(Phe) + L-phenylalanine + ATP = L-phenylalanyl-tRNA(Phe) + AMP + diphosphate + H(+). This Nostoc punctiforme (strain ATCC 29133 / PCC 73102) protein is Phenylalanine--tRNA ligase alpha subunit.